Consider the following 477-residue polypeptide: tRNA-2-methylthio-N(6)-dimethylallyladenosine synthase (477 aa).

The 118-residue stretch at Lys-3–Glu-120 folds into the MTTase N-terminal domain. Positions 12, 49, 83, 157, 161, and 164 each coordinate [4Fe-4S] cluster. A Radical SAM core domain is found at Arg-143 to Gln-375. The 64-residue stretch at Arg-378–Arg-441 folds into the TRAM domain.

Belongs to the methylthiotransferase family. MiaB subfamily. In terms of assembly, monomer. [4Fe-4S] cluster serves as cofactor.

It is found in the cytoplasm. The enzyme catalyses N(6)-dimethylallyladenosine(37) in tRNA + (sulfur carrier)-SH + AH2 + 2 S-adenosyl-L-methionine = 2-methylsulfanyl-N(6)-dimethylallyladenosine(37) in tRNA + (sulfur carrier)-H + 5'-deoxyadenosine + L-methionine + A + S-adenosyl-L-homocysteine + 2 H(+). In terms of biological role, catalyzes the methylthiolation of N6-(dimethylallyl)adenosine (i(6)A), leading to the formation of 2-methylthio-N6-(dimethylallyl)adenosine (ms(2)i(6)A) at position 37 in tRNAs that read codons beginning with uridine. In Aeromonas salmonicida (strain A449), this protein is tRNA-2-methylthio-N(6)-dimethylallyladenosine synthase.